A 258-amino-acid polypeptide reads, in one-letter code: Global transcriptional regulator CodY (258 aa).

Residues 1-156 (MSSLLSKTRR…SATIVGMEML (156 aa)) form a GAF domain region. Positions 204–223 (ASKIADKVGITRSVIVNALR) form a DNA-binding region, H-T-H motif.

This sequence belongs to the CodY family.

Its subcellular location is the cytoplasm. Functionally, DNA-binding global transcriptional regulator which is involved in the adaptive response to starvation and acts by directly or indirectly controlling the expression of numerous genes in response to nutrient availability. During rapid exponential growth, CodY is highly active and represses genes whose products allow adaptation to nutrient depletion. The protein is Global transcriptional regulator CodY of Clostridium botulinum (strain Alaska E43 / Type E3).